Reading from the N-terminus, the 512-residue chain is Probable DNA ligase (512 aa).

Glu-208 serves as a coordination point for ATP. Catalysis depends on Lys-210, which acts as the N6-AMP-lysine intermediate. Positions 215, 230, 259, 299, 374, and 380 each coordinate ATP.

Belongs to the ATP-dependent DNA ligase family. Requires Mg(2+) as cofactor.

It catalyses the reaction ATP + (deoxyribonucleotide)n-3'-hydroxyl + 5'-phospho-(deoxyribonucleotide)m = (deoxyribonucleotide)n+m + AMP + diphosphate.. In terms of biological role, DNA ligase that seals nicks in double-stranded DNA during DNA replication, DNA recombination and DNA repair. This is Probable DNA ligase from Streptomyces coelicolor (strain ATCC BAA-471 / A3(2) / M145).